Consider the following 149-residue polypeptide: MNSQDTFKFAETHEWADQEDDGLIWVGISNHAQEALGDVMFFQAPKLDQQVKQGEAIAVIESVKAASDIHAPVSGEIVALNEEVDASPELVNEEPYGIWLFKINRPLMRFLYPTRCALEFRKILCRPWRLIIKLKWGRAQLTSECGLLC.

Residues 23-104 (LIWVGISNHA…PYGIWLFKIN (82 aa)) enclose the Lipoyl-binding domain. At Lys-64 the chain carries N6-lipoyllysine.

It belongs to the GcvH family. In terms of assembly, the glycine cleavage system is composed of four proteins: P, T, L and H. The cofactor is (R)-lipoate.

The glycine cleavage system catalyzes the degradation of glycine. The H protein shuttles the methylamine group of glycine from the P protein to the T protein. The protein is Glycine cleavage system H protein of Polynucleobacter necessarius subsp. necessarius (strain STIR1).